A 906-amino-acid polypeptide reads, in one-letter code: Ribonucleoside-diphosphate reductase large subunit-like protein (906 aa).

Disordered regions lie at residues 1–70 and 89–129; these read MNPA…AGNT and VSWR…LSTF. The span at 98–109 shows a compositional bias: polar residues; it reads PDGTPSVLSLTR.

It belongs to the ribonucleoside diphosphate reductase large chain family.

The protein resides in the virion. Its subcellular location is the host cytoplasm. Functionally, does not possess a ribonucleotide reductase activity. Betaherpesviruses probably use another strategy to expand the dNTP pool in a quiescent host cell. The chain is Ribonucleoside-diphosphate reductase large subunit-like protein from Human cytomegalovirus (strain AD169) (HHV-5).